The primary structure comprises 194 residues: NADPH-flavin oxidoreductase (194 aa).

Belongs to the non-flavoprotein flavin reductase family. In terms of assembly, homodimer. It can form an isobutylamine N-hydroxylase two component enzyme system formed of a flavin reductase component (VlmR) and a monooxygenase component (VlmH).

It catalyses the reaction FADH2 + NADP(+) = FAD + NADPH + 2 H(+). It carries out the reaction FMNH2 + NADP(+) = FMN + NADPH + 2 H(+). Involved in the biosynthesis of the azoxy antibiotic valanimycin, which has an antitumor activity. Catalyzes the reduction of FAD/FMN to FADH(2)/FMNH(2) which are subsequently used for the hydroxylation of isobutylamine by the isobutylamine N-hydroxylase VlmH. It can reduce either FAD or flavin mononucleotide (FMN) but prefers FAD. The enzyme has a strong preference for NADPH as acceptor. This is NADPH-flavin oxidoreductase from Streptomyces viridifaciens.